Reading from the N-terminus, the 171-residue chain is Putative phosphoesterase BPUM_1117 (171 aa).

Histidine 34 (proton donor) is an active-site residue. 2 consecutive short sequence motifs (HXTX) follow at residues 34–37 and 115–118; these read HLTL and HVTV. Catalysis depends on histidine 115, which acts as the Proton acceptor.

This sequence belongs to the 2H phosphoesterase superfamily. YjcG family.

The chain is Putative phosphoesterase BPUM_1117 from Bacillus pumilus (strain SAFR-032).